Reading from the N-terminus, the 167-residue chain is uncharacterized protein (167 aa).

It to A.thaliana At2g20940.

This is an uncharacterized protein from Schizosaccharomyces pombe (strain 972 / ATCC 24843) (Fission yeast).